A 777-amino-acid polypeptide reads, in one-letter code: Ribosome-releasing factor 2, mitochondrial (777 aa).

The tr-type G domain maps to 68 to 353; it reads AKIRNIGIMA…AVTMYLPSPE (286 aa). GTP-binding positions include 77 to 84, 141 to 145, and 195 to 198; these read AHIDAGKT, DTPGH, and NKMD.

This sequence belongs to the TRAFAC class translation factor GTPase superfamily. Classic translation factor GTPase family. EF-G/EF-2 subfamily.

The protein resides in the mitochondrion. It catalyses the reaction GTP + H2O = GDP + phosphate + H(+). In terms of biological role, mitochondrial GTPase that mediates the disassembly of ribosomes from messenger RNA at the termination of mitochondrial protein biosynthesis. Acts in collaboration with MRRF. GTP hydrolysis follows the ribosome disassembly and probably occurs on the ribosome large subunit. Not involved in the GTP-dependent ribosomal translocation step during translation elongation. In Pongo abelii (Sumatran orangutan), this protein is Ribosome-releasing factor 2, mitochondrial.